The sequence spans 186 residues: Probable nicotinate-nucleotide adenylyltransferase (186 aa).

The protein belongs to the NadD family.

The enzyme catalyses nicotinate beta-D-ribonucleotide + ATP + H(+) = deamido-NAD(+) + diphosphate. It functions in the pathway cofactor biosynthesis; NAD(+) biosynthesis; deamido-NAD(+) from nicotinate D-ribonucleotide: step 1/1. Catalyzes the reversible adenylation of nicotinate mononucleotide (NaMN) to nicotinic acid adenine dinucleotide (NaAD). The sequence is that of Probable nicotinate-nucleotide adenylyltransferase from Thermus thermophilus (strain ATCC BAA-163 / DSM 7039 / HB27).